We begin with the raw amino-acid sequence, 139 residues long: Histone H2B (139 aa).

Residues 1 to 37 (MAPKSVASKAPASQASKAPAAASKAPAKAAKTSAAPK) are compositionally biased toward low complexity. The segment at 1–48 (MAPKSVASKAPASQASKAPAAASKAPAKAAKTSAAPKDGAKKRSKKRV) is disordered. Lys-9 carries the N6-acetyllysine; alternate modification. Residue Lys-9 forms a Glycyl lysine isopeptide (Lys-Gly) (interchain with G-Cter in SUMO); alternate linkage. Ser-13 is modified (phosphoserine). Lys-17 carries the N6-acetyllysine modification. Lys-134 participates in a covalent cross-link: Glycyl lysine isopeptide (Lys-Gly) (interchain with G-Cter in ubiquitin).

Belongs to the histone H2B family. The nucleosome is a histone octamer containing two molecules each of H2A, H2B, H3 and H4 assembled in one H3-H4 heterotetramer and two H2A-H2B heterodimers. The octamer wraps approximately 147 bp of DNA. Monoubiquitinated by the UBC2-BRE1 complex to form H2BK123ub1. H2BK123ub1 gives a specific tag for epigenetic transcriptional activation and is also prerequisite for H3K4me and H3K79me formation. H2BK123ub1 also modulates the formation of double-strand breaks during meiosis and is a prerequisite for DNA-damage checkpoint activation. In terms of processing, phosphorylated to form H2BS10ph during progression through meiotic prophase. May be correlated with chromosome condensation. Post-translationally, acetylation of N-terminal lysines and particularly formation of H2BK11ac has a positive effect on transcription. Sumoylation to form H2BK6su occurs preferentially near the telomeres and represses gene transcription.

The protein resides in the nucleus. It localises to the chromosome. Its function is as follows. Core component of nucleosome. Nucleosomes wrap and compact DNA into chromatin, limiting DNA accessibility to the cellular machineries which require DNA as a template. Histones thereby play a central role in transcription regulation, DNA repair, DNA replication and chromosomal stability. DNA accessibility is regulated via a complex set of post-translational modifications of histones, also called histone code, and nucleosome remodeling. The chain is Histone H2B (HTB1) from Cryptococcus neoformans var. neoformans serotype D (strain B-3501A) (Filobasidiella neoformans).